The following is a 148-amino-acid chain: Large ribosomal subunit protein bL9 (148 aa).

This sequence belongs to the bacterial ribosomal protein bL9 family.

In terms of biological role, binds to the 23S rRNA. The sequence is that of Large ribosomal subunit protein bL9 from Prosthecochloris aestuarii (strain DSM 271 / SK 413).